Reading from the N-terminus, the 175-residue chain is MRIVPEKLVFKAPLNKQSTEYIKLENDGEKRVIFKVRTSAPTKYCVRPNVAIIGAHESVNVQIVFLGLPKSTADDEMDQKRDKFLIVTLPIPAAYQNVEDGELLSDWPNLEEQYKDDIVFKKIKIFHSVLPKRKPSGNHDAESARAPSAGNGQSLSSRALLIITVIALLVGWIYY.

Positions 1–125 constitute an MSP domain; the sequence is MRIVPEKLVF…DDIVFKKIKI (125 aa). At 1 to 154 the chain is on the cytoplasmic side; it reads MRIVPEKLVF…RAPSAGNGQS (154 aa). The segment at 133 to 152 is disordered; it reads RKPSGNHDAESARAPSAGNG. Residues 155–175 form a helical; Anchor for type IV membrane protein membrane-spanning segment; that stretch reads LSSRALLIITVIALLVGWIYY.

It belongs to the VAMP-associated protein (VAP) (TC 9.B.17) family.

The protein resides in the membrane. Its function is as follows. Targets proteins containing a FFAT motif to membranes. Involved in regulation of phospholipid metabolism. The chain is Vesicle-associated membrane protein-associated protein SCS22 (SCS22) from Saccharomyces cerevisiae (strain ATCC 204508 / S288c) (Baker's yeast).